A 136-amino-acid polypeptide reads, in one-letter code: ATP synthase epsilon chain (136 aa).

The protein belongs to the ATPase epsilon chain family. In terms of assembly, F-type ATPases have 2 components, CF(1) - the catalytic core - and CF(0) - the membrane proton channel. CF(1) has five subunits: alpha(3), beta(3), gamma(1), delta(1), epsilon(1). CF(0) has three main subunits: a, b and c.

It is found in the cell membrane. Its function is as follows. Produces ATP from ADP in the presence of a proton gradient across the membrane. This is ATP synthase epsilon chain from Exiguobacterium sp. (strain ATCC BAA-1283 / AT1b).